The chain runs to 503 residues: Maturase K (503 aa).

It belongs to the intron maturase 2 family. MatK subfamily.

It localises to the plastid. Its subcellular location is the chloroplast. Its function is as follows. Usually encoded in the trnK tRNA gene intron. Probably assists in splicing its own and other chloroplast group II introns. The sequence is that of Maturase K from Vicia sativa (Spring vetch).